Reading from the N-terminus, the 464-residue chain is Phosphoglucosamine mutase (464 aa).

Serine 112 serves as the catalytic Phosphoserine intermediate. Positions 112, 252, 254, and 256 each coordinate Mg(2+). Serine 112 carries the post-translational modification Phosphoserine.

It belongs to the phosphohexose mutase family. Requires Mg(2+) as cofactor. Activated by phosphorylation.

It catalyses the reaction alpha-D-glucosamine 1-phosphate = D-glucosamine 6-phosphate. In terms of biological role, catalyzes the conversion of glucosamine-6-phosphate to glucosamine-1-phosphate. The chain is Phosphoglucosamine mutase from Synechococcus sp. (strain CC9605).